Reading from the N-terminus, the 861-residue chain is Cone cGMP-specific 3',5'-cyclic phosphodiesterase subunit alpha' (861 aa).

2 GAF domains span residues 75–224 (SAEQ…AVAL) and 256–433 (DVER…GWSL). 3',5'-cyclic GMP contacts are provided by residues Ser97, Asn116, 169-172 (DKQT), and Thr176. Residues 486-819 (EERQLLAILK…VEWKSLAEEY (334 aa)) enclose the PDEase domain. Residue His562 is the Proton donor of the active site. The a divalent metal cation site is built by His566, His602, Asp603, and Asp723. Residues 826 to 839 (TEEEAGKQEEEASD) show a composition bias toward basic and acidic residues. The tract at residues 826-861 (TEEEAGKQEEEASDGKAATDLGGSAEDKKSKTCLML) is disordered. Position 858 is a cysteine methyl ester (Cys858). Cys858 carries S-geranylgeranyl cysteine lipidation. The propeptide at 859-861 (LML) is removed in mature form.

It belongs to the cyclic nucleotide phosphodiesterase family. As to quaternary structure, composed of two alpha' subunits that are associated with 3 smaller proteins of 11, 13, and 15 kDa. A divalent metal cation is required as a cofactor.

The protein localises to the cell membrane. The catalysed reaction is 3',5'-cyclic GMP + H2O = GMP + H(+). Its function is as follows. As cone-specific cGMP phosphodiesterase, it plays an essential role in light detection and cone phototransduction by rapidly decreasing intracellular levels of cGMP. This is Cone cGMP-specific 3',5'-cyclic phosphodiesterase subunit alpha' (Pde6c) from Mus musculus (Mouse).